The following is a 3232-amino-acid chain: D-lysergyl-peptide-synthetase subunit 1 (3232 aa).

The adenylation (A) domain 1 stretch occupies residues 90–474 (GCLTYDEMSI…LGRKDDQVKI (385 aa)). A Carrier 1 domain is found at 617–686 (REKLLQGCFA…TLREIVIVST (70 aa)). An O-(pantetheine 4'-phosphoryl)serine modification is found at Ser649. The condensation (C) domain 1 stretch occupies residues 731-1122 (EDIYPCTHLQ…EHILTQIHSN (392 aa)). An adenylation (A) domain 2 region spans residues 1165-1572 (QAKCQAQPDA…RRKDAQVKIR (408 aa)). In terms of domain architecture, Carrier 2 spans 1717–1785 (TEHEISAIWA…TIRKLALARG (69 aa)). Ser1749 carries the post-translational modification O-(pantetheine 4'-phosphoryl)serine. The condensation (C) domain 2 stretch occupies residues 1835 to 2252 (ERIYPCSPIQ…ALPVLDEDQM (418 aa)). Residues 2276–2675 (QQCLRCPDSP…GRNDDQVKVR (400 aa)) are adenylation (A) domain 3. Residues 2810–2878 (MEAELQRLVG…RVSDLARIVE (69 aa)) enclose the Carrier 3 domain. Ser2842 carries the post-translational modification O-(pantetheine 4'-phosphoryl)serine. The segment at 2943–3218 (LYFSKPVASE…LLHWLHQQHI (276 aa)) is cyclization (Cyc) domain.

Belongs to the NRP synthetase family.

It participates in alkaloid biosynthesis; ergot alkaloid biosynthesis. Functionally, D-lysergyl-peptide-synthetase subunit 1; part of the gene cluster that mediates the biosynthesis of fungal ergot alkaloid. DmaW catalyzes the first step of ergot alkaloid biosynthesis by condensing dimethylallyl diphosphate (DMAP) and tryptophan to form 4-dimethylallyl-L-tryptophan. The second step is catalyzed by the methyltransferase easF that methylates 4-dimethylallyl-L-tryptophan in the presence of S-adenosyl-L-methionine, resulting in the formation of 4-dimethylallyl-L-abrine. The catalase easC and the FAD-dependent oxidoreductase easE then transform 4-dimethylallyl-L-abrine to chanoclavine-I which is further oxidized by easD in the presence of NAD(+), resulting in the formation of chanoclavine-I aldehyde. Agroclavine dehydrogenase easG then mediates the conversion of chanoclavine-I aldehyde to agroclavine via a non-enzymatic adduct reaction: the substrate is an iminium intermediate that is formed spontaneously from chanoclavine-I aldehyde in the presence of glutathione. The presence of easA is not required to complete this reaction. Further conversion of agroclavine to paspalic acid is a two-step process involving oxidation of agroclavine to elymoclavine and of elymoclavine to paspalic acid, the second step being performed by the elymoclavine oxidase cloA. Paspalic acid is then further converted to D-lysergic acid. Ergopeptines are assembled from D-lysergic acid and three different amino acids by the D-lysergyl-peptide-synthetases composed each of a monomudular and a trimodular nonribosomal peptide synthetase subunit. LpsB and lpsC encode the monomodular subunits responsible for D-lysergic acid activation and incorporation into the ergopeptine backbone. LpsA1 and A2 subunits encode the trimodular nonribosomal peptide synthetase assembling the tripeptide portion of ergopeptines. LpsA1 is responsible for formation of the major ergopeptine, ergotamine, and lpsA2 for alpha-ergocryptine, the minor ergopeptine of the total alkaloid mixture elaborated by C.purpurea. D-lysergyl-tripeptides are assembled by the nonribosomal peptide synthetases and released as N-(D-lysergyl-aminoacyl)-lactams. Cyclolization of the D-lysergyl-tripeptides is performed by the Fe(2+)/2-ketoglutarate-dependent dioxygenase easH which introduces a hydroxyl group into N-(D-lysergyl-aminoacyl)-lactam at alpha-C of the aminoacyl residue followed by spontaneous condensation with the terminal lactam carbonyl group. The sequence is that of D-lysergyl-peptide-synthetase subunit 1 from Claviceps purpurea (Ergot fungus).